The chain runs to 616 residues: MDYLITAFNRITHWFLTPTNLEYIGSYSLPPGLLRVNDVAVANHKATLDRSFDKYLYEHEINLITKEYRRSPIDEDSILEDFFSGDLPYFEIPFDEHVERGLECMAAAFRPPRPCRPAHILDVKHGYPYKWNVNAEPPFSTDEYFLSQRKTFGEFIRMHEYEHIDKEDFFRRHPNIESHDFLRTVVPPKFGFLKSMIFSWTRRWHHIIKSGFQDSTDLEQTGYFFNRFIFPMLLHTKTAIVKKNDPNKMRTIWGASKPWIIAETMFYWEYLAWIKHNPGATPMLWGYETFTGGWFRLNHELFCGLIQRSFLTLDWSRFDKRAYFPLLRRILYTVKTFLTFEEGYVPTHAAPTHPQWSQENIDRLERLWLWTLENLFEAPIILPDGRMYRRHFAGIPSGLFITQLLDSWYNYTMLATILSALHFDPLHCIIKVQGDDSILRLTTLIPVDQHTNFMDHIVRLADTYFNSIVNVKKSEVRNSLNGCEVLSYRNHNGLPHRDEITMLAQFYHTKARDPTPEITMAQAIGFAYASCANHNRVLWVLEDVYNYYRDLGYRPNRAGLTLTFGDSPDLTMPEMPLDHFPTKSEIRRYHTETHYQNEAQNARTWPRTLFINAPGE.

The catalysed reaction is RNA(n) + a ribonucleoside 5'-triphosphate = RNA(n+1) + diphosphate. In terms of biological role, RNA-dependent RNA polymerase which replicates the viral genome. This White clover cryptic virus 1 (isolate Boccardo/2004) (WCCV-1) protein is RNA-directed RNA polymerase.